Here is a 218-residue protein sequence, read N- to C-terminus: Monomethylamine corrinoid protein 2 (218 aa).

Residues 1-91 enclose the B12-binding N-terminal domain; sequence MTNTEIFNKL…ELEKTKVEGE (91 aa). The 125-residue stretch at 94–218 folds into the B12-binding domain; that stretch reads TGLAITFVAE…AAKVALNVMK (125 aa). H107 provides a ligand contact to methylcob(III)alamin.

It belongs to the methylamine corrinoid protein family. In terms of assembly, can form a complex with MtmB.

Its pathway is one-carbon metabolism; methanogenesis from methylamine. Acts as a methyl group carrier between MtmB and MtbA. In Methanosarcina mazei (strain ATCC BAA-159 / DSM 3647 / Goe1 / Go1 / JCM 11833 / OCM 88) (Methanosarcina frisia), this protein is Monomethylamine corrinoid protein 2 (mtmC2).